A 292-amino-acid chain; its full sequence is Cbb3-type cytochrome c oxidase subunit CcoP (292 aa).

The next 2 helical transmembrane spans lie at F11 to I31 and V62 to G82. Cytochrome c domains are found at residues E116–I195 and Q205–K288. Heme c-binding residues include C129, C132, H133, M174, C219, C222, H223, and M264.

Belongs to the CcoP / FixP family. In terms of assembly, component of the cbb3-type cytochrome c oxidase at least composed of CcoN, CcoO, CcoQ and CcoP. The cofactor is heme c.

The protein resides in the cell inner membrane. The protein operates within energy metabolism; oxidative phosphorylation. In terms of biological role, C-type cytochrome. Part of the cbb3-type cytochrome c oxidase complex. CcoP subunit is required for transferring electrons from donor cytochrome c via its heme groups to CcoO subunit. From there, electrons are shuttled to the catalytic binuclear center of CcoN subunit where oxygen reduction takes place. The complex also functions as a proton pump. This chain is Cbb3-type cytochrome c oxidase subunit CcoP, found in Helicobacter pylori (strain 52).